Consider the following 258-residue polypeptide: Ubiquinone/menaquinone biosynthesis C-methyltransferase UbiE (258 aa).

Residues Thr-81, Asp-102, and 130–131 (NA) each bind S-adenosyl-L-methionine.

This sequence belongs to the class I-like SAM-binding methyltransferase superfamily. MenG/UbiE family.

The catalysed reaction is a 2-demethylmenaquinol + S-adenosyl-L-methionine = a menaquinol + S-adenosyl-L-homocysteine + H(+). It carries out the reaction a 2-methoxy-6-(all-trans-polyprenyl)benzene-1,4-diol + S-adenosyl-L-methionine = a 5-methoxy-2-methyl-3-(all-trans-polyprenyl)benzene-1,4-diol + S-adenosyl-L-homocysteine + H(+). The protein operates within quinol/quinone metabolism; menaquinone biosynthesis; menaquinol from 1,4-dihydroxy-2-naphthoate: step 2/2. It functions in the pathway cofactor biosynthesis; ubiquinone biosynthesis. Functionally, methyltransferase required for the conversion of demethylmenaquinol (DMKH2) to menaquinol (MKH2) and the conversion of 2-polyprenyl-6-methoxy-1,4-benzoquinol (DDMQH2) to 2-polyprenyl-3-methyl-6-methoxy-1,4-benzoquinol (DMQH2). The protein is Ubiquinone/menaquinone biosynthesis C-methyltransferase UbiE of Rhizobium meliloti (strain 1021) (Ensifer meliloti).